Consider the following 429-residue polypeptide: Arsenical pump membrane protein (429 aa).

Helical transmembrane passes span 24-44, 46-66, 98-118, 121-141, 178-198, 228-248, 249-269, 274-294, 316-335, and 407-427; these read IGWSATLGAVLALASGVIHIA, IPVVWNIVWNATATFIAVIII, IVLLGAAVAALFANDGAALIL, IVIAMLLALGFSKSTTLAFVM, VMVPVDIAAIIATLVMLHLFF, WVVLLLLLVGFFVLEPMGIPV, SAIAAVGAAVLFAVAKKGHGI, VLRGAPWQIVIFSLGMYLVIY, GLWAATLGTGFLTALLSSIM, and IVMTLPVLFVTLAALALRLSV.

The protein localises to the cell inner membrane. Functionally, involved in arsenical resistance. Thought to form the channel of an arsenite pump. This chain is Arsenical pump membrane protein (arsB), found in Escherichia coli.